Reading from the N-terminus, the 326-residue chain is 4-hydroxythreonine-4-phosphate dehydrogenase (326 aa).

H132 and T133 together coordinate substrate. H162, H207, and H262 together coordinate a divalent metal cation. Substrate is bound by residues K270, N279, and R288.

The protein belongs to the PdxA family. As to quaternary structure, homodimer. Zn(2+) is required as a cofactor. It depends on Mg(2+) as a cofactor. The cofactor is Co(2+).

The protein localises to the cytoplasm. The catalysed reaction is 4-(phosphooxy)-L-threonine + NAD(+) = 3-amino-2-oxopropyl phosphate + CO2 + NADH. It participates in cofactor biosynthesis; pyridoxine 5'-phosphate biosynthesis; pyridoxine 5'-phosphate from D-erythrose 4-phosphate: step 4/5. In terms of biological role, catalyzes the NAD(P)-dependent oxidation of 4-(phosphooxy)-L-threonine (HTP) into 2-amino-3-oxo-4-(phosphooxy)butyric acid which spontaneously decarboxylates to form 3-amino-2-oxopropyl phosphate (AHAP). The sequence is that of 4-hydroxythreonine-4-phosphate dehydrogenase from Ruegeria sp. (strain TM1040) (Silicibacter sp.).